Reading from the N-terminus, the 562-residue chain is Glutamate--tRNA ligase (562 aa).

A 'HIGH' region motif is present at residues 90–100; it reads PNPSGLLHIGH.

This sequence belongs to the class-I aminoacyl-tRNA synthetase family. Glutamate--tRNA ligase type 2 subfamily.

It localises to the cytoplasm. It catalyses the reaction tRNA(Glu) + L-glutamate + ATP = L-glutamyl-tRNA(Glu) + AMP + diphosphate. Its function is as follows. Catalyzes the attachment of glutamate to tRNA(Glu) in a two-step reaction: glutamate is first activated by ATP to form Glu-AMP and then transferred to the acceptor end of tRNA(Glu). The polypeptide is Glutamate--tRNA ligase (Nanoarchaeum equitans (strain Kin4-M)).